Here is a 473-residue protein sequence, read N- to C-terminus: MNAKPGFTDYIVKDISLADFGRKELSLAETEMPGLMATREEFGPKQPLKGARIAGSLHMTIQTGVLIETLAALGADIRWVSCNIYSTQDHAAAAIAAAGIPVFAVKGETLTEYWDYTAKLFDWHGGGHPNMILDDGGDATMYVHLGLRAENGDTAFLDKPGSEEEEVFFALLKKQLKEKPKGYFAEIAKSIKGVSEETTTGVHRLYDMQKAGTLLWPAINVNDSVTKSKFDNLYGCRESLVDGIRRGTDVMMSGKVAMVAGFGDVGKGSAASLRQAGCRVMVSEVDPICALQAAMEGYEVVTMEDAAPRADIFVTATGNKDIITIEHMRAMKDRAIVCNIGHFDNEIQIAGLRNLKWTNIKPQVDEIEFPDKHRIIMLSEGRLVNLGNAMGHPSFVMSASFTNQTLAQIELFANNKDGKYKKEVYVLPKTLDEKVARLHLAKIGVKLTELRKDQADYIGVKQEGPYKSDHYRY.

Residues threonine 60, aspartate 135, and glutamate 197 each coordinate substrate. Position 198 to 200 (198 to 200) interacts with NAD(+); sequence TTT. Lysine 227 and aspartate 231 together coordinate substrate. NAD(+) contacts are provided by residues asparagine 232, 261 to 266, glutamate 284, asparagine 319, 340 to 342, and asparagine 385; these read GFGDVG and IGH.

Belongs to the adenosylhomocysteinase family. NAD(+) serves as cofactor.

It is found in the cytoplasm. It catalyses the reaction S-adenosyl-L-homocysteine + H2O = L-homocysteine + adenosine. Its pathway is amino-acid biosynthesis; L-homocysteine biosynthesis; L-homocysteine from S-adenosyl-L-homocysteine: step 1/1. Functionally, may play a key role in the regulation of the intracellular concentration of adenosylhomocysteine. The chain is Adenosylhomocysteinase from Bradyrhizobium diazoefficiens (strain JCM 10833 / BCRC 13528 / IAM 13628 / NBRC 14792 / USDA 110).